We begin with the raw amino-acid sequence, 598 residues long: Elongation factor 4 (598 aa).

The tr-type G domain occupies 2 to 184; the sequence is NNIRNFAIIA…AIVTKLPAPQ (183 aa). Residues 14-19 and 131-134 each bind GTP; these read DHGKST and NKVD.

The protein belongs to the TRAFAC class translation factor GTPase superfamily. Classic translation factor GTPase family. LepA subfamily.

The protein resides in the cell membrane. It catalyses the reaction GTP + H2O = GDP + phosphate + H(+). Functionally, required for accurate and efficient protein synthesis under certain stress conditions. May act as a fidelity factor of the translation reaction, by catalyzing a one-codon backward translocation of tRNAs on improperly translocated ribosomes. Back-translocation proceeds from a post-translocation (POST) complex to a pre-translocation (PRE) complex, thus giving elongation factor G a second chance to translocate the tRNAs correctly. Binds to ribosomes in a GTP-dependent manner. The sequence is that of Elongation factor 4 from Wolbachia pipientis subsp. Culex pipiens (strain wPip).